We begin with the raw amino-acid sequence, 116 residues long: MRVKTGVVRRRRHKKVLKLARGFYSGRRKHFRKAKEQLERSMYYAFRDRKQKKREFRSLWVVRINAACRMHDTSYSRFMHALKVANIELDRKILADMAMNDMQAFKSVLEGVKEHL.

It belongs to the bacterial ribosomal protein bL20 family.

Functionally, binds directly to 23S ribosomal RNA and is necessary for the in vitro assembly process of the 50S ribosomal subunit. It is not involved in the protein synthesizing functions of that subunit. The chain is Large ribosomal subunit protein bL20 from Helicobacter acinonychis (strain Sheeba).